The primary structure comprises 194 residues: FAD-linked sulfhydryl oxidase ERV1 (194 aa).

Residues leucine 44–alanine 72 form a disordered region. A compositionally biased stretch (pro residues) spans serine 49 to glutamate 63. An ERV/ALR sulfhydryl oxidase domain is found at alanine 72–tryptophan 172. Lysine 76, arginine 81, tryptophan 84, glutamate 121, histidine 125, cysteine 148, histidine 151, asparagine 152, asparagine 155, lysine 160, and arginine 171 together coordinate FAD. Cysteines 119 and 122 form a disulfide. Cysteine 148 and cysteine 165 are oxidised to a cystine. Residues cysteine 177 and cysteine 182 are joined by a disulfide bond. A Required for dimerization and substrate specificity motif is present at residues cysteine 177–cysteine 182.

Homodimer. The cofactor is FAD. Contains three disulfide bonds; one catalytic disulfide (Cys-119 to Cys-122), one structural disulfide (Cys-148 to Cys-165), and one shuttle disulfide (Cys-177 to Cys-182).

It is found in the mitochondrion. It carries out the reaction 2 R'C(R)SH + O2 = R'C(R)S-S(R)CR' + H2O2. Functionally, FAD-dependent sulfhydryl oxidase that catalyzes disulfide bond formation. Oxidizes thioredoxin in vitro. Required for the import and folding of small cysteine-containing proteins in the mitochondrial intermembrane space, and can act independently of the oxidoreductase MIA40. Can oxidize the cytochrome c oxidase assembly protein COX19, a typical substrate of MIA40. The chain is FAD-linked sulfhydryl oxidase ERV1 from Oryza sativa subsp. japonica (Rice).